The following is a 502-amino-acid chain: tRNA-specific adenosine deaminase 1 (502 aa).

The 439-residue stretch at 63–501 (SMGTGTKCIG…IRNPPDYHQF (439 aa)) folds into the A to I editase domain. Zn(2+) is bound at residue histidine 87. The Proton donor role is filled by glutamate 89. Positions 93 and 94 each coordinate 1D-myo-inositol hexakisphosphate. Cysteine 142 provides a ligand contact to Zn(2+). Phosphoserine is present on serine 191. Cysteine 299 lines the Zn(2+) pocket. 1D-myo-inositol hexakisphosphate-binding residues include lysine 302, arginine 305, lysine 435, and lysine 470.

This sequence belongs to the ADAT1 family. The cofactor is 1D-myo-inositol hexakisphosphate.

The enzyme catalyses adenosine(37) in tRNA(Ala) + H2O + H(+) = inosine(37) in tRNA(Ala) + NH4(+). Specifically deaminates adenosine-37 to inosine in tRNA-Ala. The protein is tRNA-specific adenosine deaminase 1 (ADAT1) of Macaca fascicularis (Crab-eating macaque).